Consider the following 115-residue polypeptide: DNA repair protein homolog YozK (115 aa).

The region spanning 12 to 115 (ILCVDMKSFY…EKCVHTYSID (104 aa)) is the UmuC domain. Positions 16 and 115 each coordinate Mg(2+).

The protein belongs to the DNA polymerase type-Y family. It depends on Mg(2+) as a cofactor.

This Bacillus subtilis (strain 168) protein is DNA repair protein homolog YozK (yozK).